Consider the following 656-residue polypeptide: Leucine aminopeptidase 2 (656 aa).

Substrate is bound by residues Gln173–Glu175 and Pro302–Glu307. His331 serves as a coordination point for Zn(2+). Glu332 serves as the catalytic Proton acceptor. Zn(2+) contacts are provided by His335 and Glu354. Tyr420 acts as the Proton donor in catalysis.

It belongs to the peptidase M1 family. It depends on Zn(2+) as a cofactor.

It localises to the cytoplasm. The protein localises to the nucleus. The catalysed reaction is an epoxide + H2O = an ethanediol. Its function is as follows. Aminopeptidase that preferentially cleaves di- and tripeptides. Also has low epoxide hydrolase activity (in vitro). Can hydrolyze the epoxide leukotriene LTA(4) but it forms preferentially 5,6-dihydroxy-7,9,11,14-eicosatetraenoic acid rather than the cytokine leukotriene B(4) as the product compared to the homologous mammalian enzyme (in vitro). The polypeptide is Leucine aminopeptidase 2 (Vanderwaltozyma polyspora (strain ATCC 22028 / DSM 70294 / BCRC 21397 / CBS 2163 / NBRC 10782 / NRRL Y-8283 / UCD 57-17) (Kluyveromyces polysporus)).